A 654-amino-acid chain; its full sequence is Protein LYK2 (654 aa).

An N-terminal signal peptide occupies residues 1-25 (MAVSVSKQYMTSLVVILLFISLSSL). Topologically, residues 26-241 (SPTSTSHSCD…PSKKKRSKMK (216 aa)) are extracellular. 3 disulfide bridges follow: C50–C102, C57–C163, and C100–C161. N-linked (GlcNAc...) asparagine glycosylation is found at N103, N170, N193, and N204. One copy of the LysM; degenerate repeat lies at 177–217 (YPVGVRDSVSSLAVRFNTTEDAIVSANNKSGVVPLKPALIP). Residues 218-238 (LDHKPEKQGSRKRNPSKKKRS) are disordered. A compositionally biased stretch (basic residues) spans 227–238 (SRKRNPSKKKRS). Residues 242–262 (LMIAVSSAIAGVCGLVTLMVF) traverse the membrane as a helical segment. Residues 263 to 654 (GYLHWKKETQ…PLVKKSSIID (392 aa)) lie on the Cytoplasmic side of the membrane. The Protein kinase domain occupies 324 to 619 (TPRKPVLEIY…EIAERVSRLV (296 aa)). ATP is bound by residues 330 to 338 (LEIYAFEEL) and K368.

It belongs to the protein kinase superfamily. Ser/Thr protein kinase family.

The protein resides in the cell membrane. Functionally, may recognize microbe-derived N-acetylglucosamine (NAG)-containing ligands. The sequence is that of Protein LYK2 (LYK2) from Arabidopsis thaliana (Mouse-ear cress).